A 380-amino-acid polypeptide reads, in one-letter code: PqqA peptide cyclase (380 aa).

Positions 8–223 constitute a Radical SAM core domain; the sequence is VNPPLWLLAE…VADYRQKMAA (216 aa). [4Fe-4S] cluster contacts are provided by C22, C26, and C29.

The protein belongs to the radical SAM superfamily. PqqE family. In terms of assembly, interacts with PqqD. The interaction is necessary for activity of PqqE. The cofactor is [4Fe-4S] cluster.

It catalyses the reaction [PQQ precursor protein] + S-adenosyl-L-methionine = E-Y cross-linked-[PQQ precursor protein] + 5'-deoxyadenosine + L-methionine + H(+). Its pathway is cofactor biosynthesis; pyrroloquinoline quinone biosynthesis. Its function is as follows. Catalyzes the cross-linking of a glutamate residue and a tyrosine residue in the PqqA protein as part of the biosynthesis of pyrroloquinoline quinone (PQQ). The sequence is that of PqqA peptide cyclase from Klebsiella pneumoniae (strain 342).